We begin with the raw amino-acid sequence, 148 residues long: Deoxyuridine 5'-triphosphate nucleotidohydrolase (148 aa).

Substrate contacts are provided by residues 67–69 (RSG), Asn-80, 84–86 (LID), and Met-94.

This sequence belongs to the dUTPase family. It depends on Mg(2+) as a cofactor.

It carries out the reaction dUTP + H2O = dUMP + diphosphate + H(+). Its pathway is pyrimidine metabolism; dUMP biosynthesis; dUMP from dCTP (dUTP route): step 2/2. This enzyme is involved in nucleotide metabolism: it produces dUMP, the immediate precursor of thymidine nucleotides and it decreases the intracellular concentration of dUTP so that uracil cannot be incorporated into DNA. This chain is Deoxyuridine 5'-triphosphate nucleotidohydrolase, found in Francisella philomiragia subsp. philomiragia (strain ATCC 25017 / CCUG 19701 / FSC 153 / O#319-036).